A 557-amino-acid chain; its full sequence is Potassium-transporting ATPase potassium-binding subunit (557 aa).

Helical transmembrane passes span 4–24 (LGAGLLQAGLLLLLLAAVHVP), 61–81 (TYALSVLGFSTVSILFLYAFL), 131–151 (GLTVQNFLSAAVGLAVAVALV), 174–194 (LRVLLPLAFAGAVLLLLTGVV), 253–273 (LEVFLILVIPFSLPRAFGTLV), 280–300 (LAVLSVMGTIFGASLALTTWA), 375–395 (GLYGMLVLAVITVFVAGLMVG), 412–432 (CAALYVLVTPAVLLTGTAVAL), 483–503 (LAIWLGRFLPMVLVLALAGAF), and 528–548 (LAVVVVVSALTFFPALALGPI).

Belongs to the KdpA family. The system is composed of three essential subunits: KdpA, KdpB and KdpC.

It localises to the cell membrane. Part of the high-affinity ATP-driven potassium transport (or Kdp) system, which catalyzes the hydrolysis of ATP coupled with the electrogenic transport of potassium into the cytoplasm. This subunit binds the extracellular potassium ions and delivers the ions to the membrane domain of KdpB through an intramembrane tunnel. This is Potassium-transporting ATPase potassium-binding subunit from Kineococcus radiotolerans (strain ATCC BAA-149 / DSM 14245 / SRS30216).